Reading from the N-terminus, the 168-residue chain is Putative apoptosis regulator A9 (168 aa).

A helical membrane pass occupies residues 143 to 162 (SAFYFLTAAASCLTLLLLYF).

It is found in the host membrane. Suppresses apoptosis in host cell and thus facilitates production of progeny virions. The protein is Putative apoptosis regulator A9 (A9) of Alcelaphine herpesvirus 1 (strain C500) (AlHV-1).